We begin with the raw amino-acid sequence, 673 residues long: Pesticin receptor (673 aa).

Positions 1-22 (MKMTRLYPLALGGLLLPAIANA) are cleaved as a signal peptide. The TonB box signature appears at 30–37 (STLEVTAS). One can recognise a TBDR plug domain in the interval 41 to 155 (SRSASANNVS…QGGIINIVTQ (115 aa)). The TBDR beta-barrel domain maps to 160–672 (TPRGYIEGGV…TVGINTRIDF (513 aa)). The short motif at 657–673 (QVNMGRTVGINTRIDFF) is the TonB C-terminal box element.

This sequence belongs to the TonB-dependent receptor family.

It localises to the cell outer membrane. Its function is as follows. Receptor for the bacteriocin pesticin and for the siderophore yersiniabactin. This is Pesticin receptor (fyuA) from Yersinia enterocolitica serotype O:8 / biotype 1B (strain NCTC 13174 / 8081).